The following is a 193-amino-acid chain: Thymidine kinase (193 aa).

ATP-binding positions include 9–16 and 87–90; these read STMNAGKS and DEAN. The Proton acceptor role is filled by Glu-88. Zn(2+)-binding residues include Cys-145, Cys-147, Cys-182, and His-185.

This sequence belongs to the thymidine kinase family. As to quaternary structure, homotetramer.

It localises to the cytoplasm. The enzyme catalyses thymidine + ATP = dTMP + ADP + H(+). The polypeptide is Thymidine kinase (Agrobacterium fabrum (strain C58 / ATCC 33970) (Agrobacterium tumefaciens (strain C58))).